The following is a 295-amino-acid chain: Bifunctional protein FolD (295 aa).

Residues 167–169 (GRS), S192, and I233 each bind NADP(+).

Belongs to the tetrahydrofolate dehydrogenase/cyclohydrolase family. As to quaternary structure, homodimer.

It carries out the reaction (6R)-5,10-methylene-5,6,7,8-tetrahydrofolate + NADP(+) = (6R)-5,10-methenyltetrahydrofolate + NADPH. The enzyme catalyses (6R)-5,10-methenyltetrahydrofolate + H2O = (6R)-10-formyltetrahydrofolate + H(+). The protein operates within one-carbon metabolism; tetrahydrofolate interconversion. Its function is as follows. Catalyzes the oxidation of 5,10-methylenetetrahydrofolate to 5,10-methenyltetrahydrofolate and then the hydrolysis of 5,10-methenyltetrahydrofolate to 10-formyltetrahydrofolate. In Paramagnetospirillum magneticum (strain ATCC 700264 / AMB-1) (Magnetospirillum magneticum), this protein is Bifunctional protein FolD.